The primary structure comprises 61 residues: U-stichotoxin-Hcr1a (61 aa).

Residues 1–21 form the signal peptide; it reads MKPAIFLMLFVAMFLISEGEG. Residues 22 to 31 constitute a propeptide that is removed on maturation; sequence FKPKDAPQER. Position 36 is a hydroxyproline (Pro36). 2 cysteine pairs are disulfide-bonded: Cys41-Cys53 and Cys44-Cys59.

This sequence belongs to the Hau1a/HC18/HC19 family.

Its subcellular location is the secreted. The protein resides in the nematocyst. Functionally, toxin that is lethal to crab. Does not produce the typical symptoms associated with sodium channel toxins in crabs, suggesting that it likely does not act on sodium channels. This chain is U-stichotoxin-Hcr1a, found in Radianthus crispa (Leathery sea anemone).